We begin with the raw amino-acid sequence, 232 residues long: 7-cyano-7-deazaguanine synthase (232 aa).

8 to 18 (FSGGQDSTTCL) contacts ATP. Cys-187, Cys-196, Cys-199, and Cys-202 together coordinate Zn(2+).

It belongs to the QueC family. Zn(2+) is required as a cofactor.

The enzyme catalyses 7-carboxy-7-deazaguanine + NH4(+) + ATP = 7-cyano-7-deazaguanine + ADP + phosphate + H2O + H(+). It participates in purine metabolism; 7-cyano-7-deazaguanine biosynthesis. Its function is as follows. Catalyzes the ATP-dependent conversion of 7-carboxy-7-deazaguanine (CDG) to 7-cyano-7-deazaguanine (preQ(0)). The polypeptide is 7-cyano-7-deazaguanine synthase (Vibrio vulnificus (strain YJ016)).